The sequence spans 194 residues: uncharacterized protein (194 aa).

To A.rhizogenes plasmid pRia4B ORF-3 in virA region.

This is an uncharacterized protein from Sinorhizobium fredii (strain NBRC 101917 / NGR234).